A 160-amino-acid polypeptide reads, in one-letter code: Growth arrest and DNA damage-inducible protein GADD45 beta (160 aa).

This sequence belongs to the GADD45 family. In terms of assembly, interacts with GADD45GIP1.

In terms of biological role, involved in the regulation of growth and apoptosis. Mediates activation of stress-responsive MTK1/MEKK4 MAPKKK. This chain is Growth arrest and DNA damage-inducible protein GADD45 beta (GADD45B), found in Bos taurus (Bovine).